Here is a 304-residue protein sequence, read N- to C-terminus: Dermonecrotic toxin LiSicTox-betaIA1ii (304 aa).

A signal peptide spans M1–G21. Positions H22–R26 are excised as a propeptide. The active site involves H38. Mg(2+) is bound by residues E58 and D60. H74 acts as the Nucleophile in catalysis. Intrachain disulfides connect C78–C84 and C80–C223. D118 contacts Mg(2+).

It belongs to the arthropod phospholipase D family. Class II subfamily. Mg(2+) is required as a cofactor. As to expression, expressed by the venom gland.

It is found in the secreted. The enzyme catalyses an N-(acyl)-sphingosylphosphocholine = an N-(acyl)-sphingosyl-1,3-cyclic phosphate + choline. It catalyses the reaction an N-(acyl)-sphingosylphosphoethanolamine = an N-(acyl)-sphingosyl-1,3-cyclic phosphate + ethanolamine. The catalysed reaction is a 1-acyl-sn-glycero-3-phosphocholine = a 1-acyl-sn-glycero-2,3-cyclic phosphate + choline. It carries out the reaction a 1-acyl-sn-glycero-3-phosphoethanolamine = a 1-acyl-sn-glycero-2,3-cyclic phosphate + ethanolamine. In terms of biological role, dermonecrotic toxins cleave the phosphodiester linkage between the phosphate and headgroup of certain phospholipids (sphingolipid and lysolipid substrates), forming an alcohol (often choline) and a cyclic phosphate. This toxin acts on sphingomyelin (SM) with low activity. It may also act on ceramide phosphoethanolamine (CPE), lysophosphatidylcholine (LPC) and lysophosphatidylethanolamine (LPE), but not on lysophosphatidylserine (LPS), and lysophosphatidylglycerol (LPG). It acts by transphosphatidylation, releasing exclusively cyclic phosphate products as second products. Induces dermonecrosis, hemolysis, increased vascular permeability, edema, inflammatory response, and platelet aggregation. The chain is Dermonecrotic toxin LiSicTox-betaIA1ii from Loxosceles intermedia (Brown spider).